Reading from the N-terminus, the 54-residue chain is Ovomucoid (54 aa).

Residues 4–54 (VDCSDYPKPSCTLEDKPLCGSDNQTYSNKCSFCNAVVDSNGTLTLSHFGKC) form the Kazal-like domain. 3 disulfides stabilise this stretch: cysteine 6/cysteine 36, cysteine 14/cysteine 33, and cysteine 22/cysteine 54. N-linked (GlcNAc...) asparagine glycosylation occurs at asparagine 43.

The protein localises to the secreted. The sequence is that of Ovomucoid from Megapodius freycinet (Dusky scrubfowl).